The sequence spans 98 residues: Co-chaperonin GroES 3 (98 aa).

The protein belongs to the GroES chaperonin family. Heptamer of 7 subunits arranged in a ring. Interacts with the chaperonin GroEL.

The protein localises to the cytoplasm. In terms of biological role, together with the chaperonin GroEL, plays an essential role in assisting protein folding. The GroEL-GroES system forms a nano-cage that allows encapsulation of the non-native substrate proteins and provides a physical environment optimized to promote and accelerate protein folding. GroES binds to the apical surface of the GroEL ring, thereby capping the opening of the GroEL channel. In Mesorhizobium japonicum (strain LMG 29417 / CECT 9101 / MAFF 303099) (Mesorhizobium loti (strain MAFF 303099)), this protein is Co-chaperonin GroES 3.